The sequence spans 778 residues: Glutathione biosynthesis bifunctional protein GshAB (778 aa).

The segment at 1-354 is glutamate--cysteine ligase; that stretch reads MVNLDKGLLK…EEFFKNHDMV (354 aa). In terms of domain architecture, ATP-grasp spans 521–777; it reads KDILRENNIR…AGEKILDLLF (257 aa). ATP is bound at residue 548–606; that stretch reads RLFKDEKIVIKPKSTNFGLGISIFPGEYSREDYDKAVEIAFREDSSILIEEFMTGKEYR. Mg(2+) is bound by residues aspartate 728, glutamate 747, and asparagine 749. Mn(2+) is bound by residues aspartate 728, glutamate 747, and asparagine 749.

This sequence in the N-terminal section; belongs to the glutamate--cysteine ligase type 1 family. Type 2 subfamily. In terms of assembly, monomer. Mg(2+) serves as cofactor. Mn(2+) is required as a cofactor.

It carries out the reaction L-cysteine + L-glutamate + ATP = gamma-L-glutamyl-L-cysteine + ADP + phosphate + H(+). It catalyses the reaction gamma-L-glutamyl-L-cysteine + glycine + ATP = glutathione + ADP + phosphate + H(+). It participates in sulfur metabolism; glutathione biosynthesis; glutathione from L-cysteine and L-glutamate: step 1/2. The protein operates within sulfur metabolism; glutathione biosynthesis; glutathione from L-cysteine and L-glutamate: step 2/2. In terms of biological role, synthesizes glutathione from L-glutamate and L-cysteine via gamma-L-glutamyl-L-cysteine. This Clostridium perfringens (strain 13 / Type A) protein is Glutathione biosynthesis bifunctional protein GshAB.